Consider the following 700-residue polypeptide: Choline transporter-like protein 5-B (700 aa).

At 1–4 (GCTD) the chain is on the cytoplasmic side. Residues 5–25 (VLCCVIFVIVILGYIVLGTVA) traverse the membrane as a helical segment. Topologically, residues 26 to 209 (WMHGDPRKVV…KIFEDYASSW (184 aa)) are extracellular. N-linked (GlcNAc...) asparagine glycosylation is found at N157 and N164. Residues 210-230 (FWILIGLVISMLVSLVFILLL) traverse the membrane as a helical segment. Residues 231–233 (RFT) lie on the Cytoplasmic side of the membrane. A helical membrane pass occupies residues 234-254 (AGVLFWLVIFGVIAAVGYGIW). Residues 255–292 (HCYWEYSSLKGKPDSDVTISDIGFQTDFRVYLQLSQTW) lie on the Extracellular side of the membrane. Residues 293-313 (LIFMTSLAVIEAIIILVLIFL) traverse the membrane as a helical segment. The Cytoplasmic portion of the chain corresponds to 314-341 (RNRVRIAIALLKEGSKAIGCIMSTLFYP). The chain crosses the membrane as a helical span at residues 342 to 362 (IITFLLLALCIAYWAVTAVFL). Topologically, residues 363–432 (ASSGEAVYKV…LQLCNLLVFL (70 aa)) are extracellular. N-linked (GlcNAc...) asparagine glycans are attached at residues N383 and N395. Residues 433–455 (WLVNFTIALGQCTLAGAFAAYYW) traverse the membrane as a helical segment. Residues 456-482 (ALRKPADIPPCPLASSFGRALRYHTGS) are Cytoplasmic-facing. A helical membrane pass occupies residues 483–503 (LAFGALILSIVQFIRIILEYL). Residues 504 to 541 (DHKLKGAHNAFTRFLLCCLKCCFWCLEHFIKFMNRNAY) are Extracellular-facing. Residues 542 to 562 (IMISIYGKNFCTSARDAFFLL) form a helical membrane-spanning segment. Over 563–577 (MRNVMRVAVLDKVTD) the chain is Cytoplasmic. Residues 578–598 (FLLFLGKLLISGSVGVLAFFF) form a helical membrane-spanning segment. The Extracellular portion of the chain corresponds to 599-616 (FTRQIPVIQEEVPSLNYY). The helical transmembrane segment at 617–637 (WVPLLTVIFGSYMIAHGFFNV) threads the bilayer. At 638-687 (YAMCVDTLFLCFLLDLEKNDGSATRPYYMCSSLRAILNKKNQKRPKETKR) the chain is on the cytoplasmic side. The disordered stretch occupies residues 676–700 (KKNQKRPKETKRGRKQKKEQPKSRH). The segment covering 677–692 (KNQKRPKETKRGRKQK) has biased composition (basic residues).

This sequence belongs to the CTL (choline transporter-like) family.

It is found in the cell membrane. The enzyme catalyses choline(out) + n H(+)(in) = choline(in) + n H(+)(out). Choline/H+ antiporter. In Danio rerio (Zebrafish), this protein is Choline transporter-like protein 5-B (slc44a5b).